A 129-amino-acid chain; its full sequence is Small ribosomal subunit protein uS11 (129 aa).

Belongs to the universal ribosomal protein uS11 family. As to quaternary structure, part of the 30S ribosomal subunit. Interacts with proteins S7 and S18. Binds to IF-3.

Functionally, located on the platform of the 30S subunit, it bridges several disparate RNA helices of the 16S rRNA. Forms part of the Shine-Dalgarno cleft in the 70S ribosome. The protein is Small ribosomal subunit protein uS11 of Bartonella bacilliformis (strain ATCC 35685 / KC583 / Herrer 020/F12,63).